We begin with the raw amino-acid sequence, 141 residues long: Large ribosomal subunit protein uL11 (141 aa).

The protein belongs to the universal ribosomal protein uL11 family. Part of the ribosomal stalk of the 50S ribosomal subunit. Interacts with L10 and the large rRNA to form the base of the stalk. L10 forms an elongated spine to which L12 dimers bind in a sequential fashion forming a multimeric L10(L12)X complex. One or more lysine residues are methylated.

Its function is as follows. Forms part of the ribosomal stalk which helps the ribosome interact with GTP-bound translation factors. The protein is Large ribosomal subunit protein uL11 of Cyanothece sp. (strain PCC 7425 / ATCC 29141).